An 81-amino-acid polypeptide reads, in one-letter code: Photosystem I iron-sulfur center (81 aa).

4Fe-4S ferredoxin-type domains lie at Ser-2–Trp-31 and Ile-39–Tyr-68. 8 residues coordinate [4Fe-4S] cluster: Cys-11, Cys-14, Cys-17, Cys-21, Cys-48, Cys-51, Cys-54, and Cys-58.

As to quaternary structure, the eukaryotic PSI reaction center is composed of at least 11 subunits. It depends on [4Fe-4S] cluster as a cofactor.

It is found in the plastid. Its subcellular location is the chloroplast thylakoid membrane. The catalysed reaction is reduced [plastocyanin] + hnu + oxidized [2Fe-2S]-[ferredoxin] = oxidized [plastocyanin] + reduced [2Fe-2S]-[ferredoxin]. Functionally, apoprotein for the two 4Fe-4S centers FA and FB of photosystem I (PSI); essential for photochemical activity. FB is the terminal electron acceptor of PSI, donating electrons to ferredoxin. The C-terminus interacts with PsaA/B/D and helps assemble the protein into the PSI complex. Required for binding of PsaD and PsaE to PSI. PSI is a plastocyanin/cytochrome c6-ferredoxin oxidoreductase, converting photonic excitation into a charge separation, which transfers an electron from the donor P700 chlorophyll pair to the spectroscopically characterized acceptors A0, A1, FX, FA and FB in turn. The polypeptide is Photosystem I iron-sulfur center (Pleurastrum terricola (Filamentous green alga)).